Consider the following 157-residue polypeptide: 2-C-methyl-D-erythritol 2,4-cyclodiphosphate synthase (157 aa).

A divalent metal cation is bound by residues Asp8 and His10. 4-CDP-2-C-methyl-D-erythritol 2-phosphate contacts are provided by residues 8–10 (DVH) and 34–35 (HS). His42 serves as a coordination point for a divalent metal cation. Residues 56 to 58 (DIG), 61 to 65 (FPDTD), 100 to 106 (AQAPKMA), 132 to 135 (TTTE), Phe139, and Arg142 each bind 4-CDP-2-C-methyl-D-erythritol 2-phosphate.

Belongs to the IspF family. In terms of assembly, homotrimer. It depends on a divalent metal cation as a cofactor.

It catalyses the reaction 4-CDP-2-C-methyl-D-erythritol 2-phosphate = 2-C-methyl-D-erythritol 2,4-cyclic diphosphate + CMP. It participates in isoprenoid biosynthesis; isopentenyl diphosphate biosynthesis via DXP pathway; isopentenyl diphosphate from 1-deoxy-D-xylulose 5-phosphate: step 4/6. Involved in the biosynthesis of isopentenyl diphosphate (IPP) and dimethylallyl diphosphate (DMAPP), two major building blocks of isoprenoid compounds. Catalyzes the conversion of 4-diphosphocytidyl-2-C-methyl-D-erythritol 2-phosphate (CDP-ME2P) to 2-C-methyl-D-erythritol 2,4-cyclodiphosphate (ME-CPP) with a corresponding release of cytidine 5-monophosphate (CMP). The protein is 2-C-methyl-D-erythritol 2,4-cyclodiphosphate synthase of Azotobacter vinelandii (strain DJ / ATCC BAA-1303).